The primary structure comprises 255 residues: MVRIFITGSSDGIGQAAAKVLSEQGHSVVLHARNADRAASAQEAVPGAEAVLVGDLSSIAETKALAEEANKLPPFDTVIHNAGIGYGATASQEITADKISAVFAVNTLAPYILTCLMHKPKARLLYMSSDSHYGGDESLRNITQSHSYGNTKLHDVMLANAFSRRWGNAIQVVSMHPGWVRTKMGGVMAPGALDRPARVLADWAIGKGDLARLKSGTFFTTSGPESAHPGADNVQKQEELLRICKEVSGVGVPGG.

Positions 13, 37, 55, 81, 148, 152, 180, and 182 each coordinate NADP(+). The active-site Proton donor is the tyrosine 148. The active-site Lowers pKa of active site Tyr is lysine 152.

It belongs to the short-chain dehydrogenases/reductases (SDR) family.

Involved in osmoadaptation. This is an uncharacterized protein from Emericella nidulans (strain FGSC A4 / ATCC 38163 / CBS 112.46 / NRRL 194 / M139) (Aspergillus nidulans).